We begin with the raw amino-acid sequence, 492 residues long: N-succinylglutamate 5-semialdehyde dehydrogenase (492 aa).

Residue 220 to 225 (GSANTG) participates in NAD(+) binding. Residues glutamate 243 and cysteine 277 contribute to the active site.

It belongs to the aldehyde dehydrogenase family. AstD subfamily.

The enzyme catalyses N-succinyl-L-glutamate 5-semialdehyde + NAD(+) + H2O = N-succinyl-L-glutamate + NADH + 2 H(+). It functions in the pathway amino-acid degradation; L-arginine degradation via AST pathway; L-glutamate and succinate from L-arginine: step 4/5. Its function is as follows. Catalyzes the NAD-dependent reduction of succinylglutamate semialdehyde into succinylglutamate. This chain is N-succinylglutamate 5-semialdehyde dehydrogenase, found in Escherichia coli (strain ATCC 8739 / DSM 1576 / NBRC 3972 / NCIMB 8545 / WDCM 00012 / Crooks).